The sequence spans 723 residues: Polyribonucleotide nucleotidyltransferase (723 aa).

Mg(2+) is bound by residues aspartate 487 and aspartate 493. The region spanning 554–613 is the KH domain; that stretch reads PKILIMHINPDKIREVIGPSGKQINKIIDETGVKIDIEQDGTIFISSVDEAANQKAKQII. In terms of domain architecture, S1 motif spans 623-691; sequence GQVYLGKVKR…KQGRVNLSRK (69 aa). Residues 702–723 are disordered; sequence GELPRESREKRGRRPERHRMKP. The span at 711–723 shows a compositional bias: basic residues; that stretch reads KRGRRPERHRMKP.

This sequence belongs to the polyribonucleotide nucleotidyltransferase family. The cofactor is Mg(2+).

The protein localises to the cytoplasm. The catalysed reaction is RNA(n+1) + phosphate = RNA(n) + a ribonucleoside 5'-diphosphate. Its function is as follows. Involved in mRNA degradation. Catalyzes the phosphorolysis of single-stranded polyribonucleotides processively in the 3'- to 5'-direction. This Geobacillus kaustophilus (strain HTA426) protein is Polyribonucleotide nucleotidyltransferase.